A 688-amino-acid chain; its full sequence is Elongation factor G (688 aa).

In terms of domain architecture, tr-type G spans 8–282 (EKFRNFGIMA…GVVDYLPSPL (275 aa)). GTP contacts are provided by residues 17–24 (AHIDAGKT), 81–85 (DTPGH), and 135–138 (NKMD).

This sequence belongs to the TRAFAC class translation factor GTPase superfamily. Classic translation factor GTPase family. EF-G/EF-2 subfamily.

It is found in the cytoplasm. In terms of biological role, catalyzes the GTP-dependent ribosomal translocation step during translation elongation. During this step, the ribosome changes from the pre-translocational (PRE) to the post-translocational (POST) state as the newly formed A-site-bound peptidyl-tRNA and P-site-bound deacylated tRNA move to the P and E sites, respectively. Catalyzes the coordinated movement of the two tRNA molecules, the mRNA and conformational changes in the ribosome. The protein is Elongation factor G of Clostridium perfringens (strain ATCC 13124 / DSM 756 / JCM 1290 / NCIMB 6125 / NCTC 8237 / Type A).